A 475-amino-acid polypeptide reads, in one-letter code: MNNLFRSIPAVDLCLTALGQADPSLVEAPRGLMRDLITEFWDKKRHEIREGHCKKNEQLTLDACLPGLMTHVRAGLRSRFRAALNATGVVVHTNMGRSVLAKEAREAVITAATGYCNLELDMQSGGRGSRHALVEDLLCRLTGAEAALVVNNNAAAVLLVLDTFCKGGEVVVSRGELVEIGGSFRIPEVMEKSGATLREVGATNRTHLHDYSAAINENTRALMRVHTSNYRIVGFHSAVPLPELAALARRHDLPLIEDLGSGSLTDFSSCGLPDEPTVPSVLAQGADIATFSGDKVLGGPQAGIITGRKDMVDTLKRNPLTRALRCDKLCLAGLEATLRLYLDPEKARQKIPTLRMICRPAEELARAARTLAAALRKGLAGSSASCLVSLRADVSRVGGGAFPQYDLPTTLVCLKPENCSATALKAALLRTDPPLIGRLEDDSFCLDPRTLSAEDRPTLLRVLREALALAAKEII.

Lys295 carries the N6-(pyridoxal phosphate)lysine modification.

Belongs to the SelA family. It depends on pyridoxal 5'-phosphate as a cofactor.

It localises to the cytoplasm. The enzyme catalyses L-seryl-tRNA(Sec) + selenophosphate + H(+) = L-selenocysteinyl-tRNA(Sec) + phosphate. It functions in the pathway aminoacyl-tRNA biosynthesis; selenocysteinyl-tRNA(Sec) biosynthesis; selenocysteinyl-tRNA(Sec) from L-seryl-tRNA(Sec) (bacterial route): step 1/1. Its function is as follows. Converts seryl-tRNA(Sec) to selenocysteinyl-tRNA(Sec) required for selenoprotein biosynthesis. The sequence is that of L-seryl-tRNA(Sec) selenium transferase from Desulfovibrio desulfuricans (strain ATCC 27774 / DSM 6949 / MB).